The sequence spans 586 residues: Asparagine synthetase [glutamine-hydrolyzing] 1 (586 aa).

Cys-2 acts as the For GATase activity in catalysis. Positions 2–185 constitute a Glutamine amidotransferase type-2 domain; it reads CGILAVLGCS…PGHLYSSRER (184 aa). L-glutamine-binding positions include 50–54, 75–77, and Asp-98; these read RLAIV and NGE. Positions 193 to 516 constitute an Asparagine synthetase domain; it reads PTWFSESIPS…PQNSARLTVP (324 aa). Residues Leu-231, Val-267, and 341 to 342 each bind ATP; that span reads SG.

The catalysed reaction is L-aspartate + L-glutamine + ATP + H2O = L-asparagine + L-glutamate + AMP + diphosphate + H(+). The protein operates within amino-acid biosynthesis; L-asparagine biosynthesis; L-asparagine from L-aspartate (L-Gln route): step 1/1. The polypeptide is Asparagine synthetase [glutamine-hydrolyzing] 1 (AS1) (Lotus japonicus (Lotus corniculatus var. japonicus)).